The primary structure comprises 673 residues: Polygalacturonate 4-alpha-galacturonosyltransferase (673 aa).

At 1-22 the chain is on the cytoplasmic side; it reads MALKRGLSGVNRIRGSGGGSRS. The helical; Signal-anchor for type II membrane protein transmembrane segment at 23–43 threads the bilayer; that stretch reads VLVLLIFFCVFAPLCFFVGRG. Over 44-673 the chain is Lumenal; that stretch reads VYIDSSNDYS…PYLRRCNLHE (630 aa). Asparagine 103 is a glycosylation site (N-linked (GlcNAc...) asparagine). Positions 112-136 are disordered; the sequence is GVDPSFRHSENPATPDVKSNNLNEK. N-linked (GlcNAc...) asparagine glycans are attached at residues asparagine 382, asparagine 434, asparagine 538, and asparagine 585.

It belongs to the glycosyltransferase 8 family. Expressed in seedlings, inflorescences, flowers, siliques, pollen, roots, stems and leaves.

It is found in the golgi apparatus membrane. It catalyses the reaction [(1-&gt;4)-alpha-D-galacturonosyl](n) + UDP-alpha-D-galacturonate = [(1-&gt;4)-alpha-D-galacturonosyl](n+1) + UDP + H(+). It functions in the pathway glycan metabolism; pectin biosynthesis. Its function is as follows. Involved in pectin biosynthesis. Catalyzes the transfer of galacturonic acid from uridine 5'-diphosphogalacturonic acid onto the pectic polysaccharide homogalacturonan. This Arabidopsis thaliana (Mouse-ear cress) protein is Polygalacturonate 4-alpha-galacturonosyltransferase (GAUT1).